The chain runs to 1390 residues: MLAKIGLLASILVLNLVGQITPQFSENLPDPDPQSGQQPQNYQPSYNKDYSPRYNPLYTGQQSADPNQFDNTLVDGQSPNTYKGYYDGRAGGGGLGGNVVGPGNNLGGLGPQYDPFNRNSIGSAGVSYRDAYTDEDNFCPEHWVSFRQTCYRFIRSPKRNWAEAKKICKAHNADLINVDNVEKHSFILKNLILQNQRQNRFFISARQTGPLNWVNDDNTQLVQIEDSFSMDEQVPLENEDLHDNRFLVQNDLNNQNINNPNQFYNSLPGTVNQRNQNNLRGFIGPNQPYGDNRYVRDRVVYAFSKKRDRWMFMPAYEIELNLFICESKVLYSSDNVNIKLDDKRPYHYGLDINDMERIPRGPYFVKQPNDTTFDVNKNRLINDVTLSCLANGYPTPSYTWYREVYVDDRLEYQKIDPLAQDRYTISGGNLIIYEPKQALDQGAYHCVAENKFGRIRSESAHLNFGFIMEFNLKRSAETSEMNWGKSIFCDPPQHYPDVRYYWARDYFPNFVEEDQRVFVSRDGALYFSFIETVDRANYSCTVQTLVSDTGRNGPFFPLRVTPNSNYQALIFANTFPKVFPEAPVAGDEIRLECMAFGYPIPSYNWTRQGLPLQRNAYTINYGRVLIIQNATTNDNGEYSCTITNPRKTLMKSIYINIQMRPQFTIPLKDMIKDYNSDVTFICEAFAIPDANYTWYKNAERLDPANINRDRYIIQDNVLTIKFLEKDKDDAMYQCGAQNQLKTSFSSAQLRVLSMKPSFKKHPLESEVYAVYNGNTTIVCDPEAAPRPKFQWKKDGQVIGSGGHRRILPSGTLTISPTSRDDEGIYTCIASNQAGTDESHARVIVLQEIRFIETPPQRIVSKEHDLIFLHCEAAFDELLDIAYVWKHNGEVLKNNHDGTGRIIVDWNRLTVHNTSMRDAGDYECVVKSAVNEISSKTSVSIEGAPGAPGGVQVIQISKTKAIIEWVDGSHNGRAIRYYNILGRTNWNRTWVNVSTHVQAREVDRYTSRQQAEVVNLTPWSAYEFSVTAVNDLGIGTPSAPSPIYSTYEDKPYIAPRNVGGGGGKIGDLTITWDPLLPQEQHSHGIHYKVFWKLKGAIEWASDEIKKQDHMGVAVVNIPLNNYYTEYEVKVQAINSVGKGPESEIAVIHSAEDMPQVAPQKPIALAYNSTCFNVTWQPIDMSRENIRGKLIGHRLKYWKTTHQEEDSVYYLSRTTRNWALIVGLQPDTYYFVKVMAYNAAGEGPESERFEERTYRKAPQKPPSSVHVYGINPSTVRVVWRYVSPSQDEEPVEGYKVRIWESDQNMITANNTIVPIGQKLESYINNLTPGKSYNMRVLAYSNGGDGRMSSPTLHFQMGKTTRNGANTRHGHNINTALILSTLLLISTFLYTSQ.

An N-terminal signal peptide occupies residues 1 to 18; it reads MLAKIGLLASILVLNLVG. The tract at residues 25–67 is disordered; sequence SENLPDPDPQSGQQPQNYQPSYNKDYSPRYNPLYTGQQSADPN. Polar residues predominate over residues 58–67; sequence YTGQQSADPN. Ig-like C2-type domains follow at residues 362 to 463, 468 to 561, 576 to 656, 661 to 745, 756 to 843, and 848 to 939; these read PYFV…AHLN, MEFN…LRVT, PKVF…IYIN, PQFT…TSFS, PSFK…ARVI, and IRFI…TSVS. Asn-369 is a glycosylation site (N-linked (GlcNAc...) asparagine). 4 disulfide bridges follow: Cys-388–Cys-446, Cys-489–Cys-540, Cys-593–Cys-640, and Cys-682–Cys-734. N-linked (GlcNAc...) asparagine glycosylation is found at Asn-537, Asn-604, Asn-629, Asn-691, and Asn-774. 2 cysteine pairs are disulfide-bonded: Cys-779–Cys-827 and Cys-870–Cys-923. 3 N-linked (GlcNAc...) asparagine glycosylation sites follow: Asn-912, Asn-986, and Asn-991. 4 Fibronectin type-III domains span residues 946–1048, 1053–1151, 1156–1254, and 1259–1357; these read APGG…TYED, APRN…SAED, APQK…TYRK, and PPSS…MGKT. Residues Asn-1166, Asn-1171, and Asn-1307 are each glycosylated (N-linked (GlcNAc...) asparagine). Residue Ala-1362 is the site of GPI-anchor amidated alanine attachment. Positions 1363-1390 are cleaved as a propeptide — removed in mature form; the sequence is NTRHGHNINTALILSTLLLISTFLYTSQ.

The protein belongs to the immunoglobulin superfamily. Contactin family. As to quaternary structure, forms a complex with Nrg and Nrx. Forms a complex composed of septa junction proteins Nrx-IV/Nrx, Tsf2/MTf, Cont and Nrg during late embryogenesis. In terms of processing, N-glycosylated. Expressed in ectodermally derived epithelial cells from stage 12. All these tissues, such as epidermis, hindgut, foregut, salivary glands and trachea, which contain pleated septate junctions. Expressed by ectodermally derived epithelial cells and along peripheral nerves. Not present in midline glial cells. Expressed in epithelial cells and glial cells of peripheral nerves.

Its subcellular location is the cell membrane. The protein localises to the cell junction. It is found in the septate junction. Its function is as follows. Required for organization of septate junctions and paracellular barrier functions. Septate junctions, which are the equivalent of vertebrates tight junctions, are characterized by regular arrays of transverse structures that span the intermembrane space and form a physical barrier to diffusion. The protein is Contactin (Cont) of Drosophila melanogaster (Fruit fly).